Here is a 175-residue protein sequence, read N- to C-terminus: uncharacterized protein (175 aa).

This is an uncharacterized protein from Escherichia coli.